Here is a 418-residue protein sequence, read N- to C-terminus: Transmembrane protease serine 11A (418 aa).

At 1–18 (MMYRTVGFGTRSRNLKPW) the chain is on the cytoplasmic side. The chain crosses the membrane as a helical; Signal-anchor for type II membrane protein span at residues 19 to 39 (MIAVLIVLSLTVVAVTIGLLV). Residues 40–418 (HFLVFDQKKE…RNWIASKTGI (379 aa)) lie on the Extracellular side of the membrane. An SEA domain is found at 47 to 164 (KKEYYHGSFK…SSVQVNAMSS (118 aa)). N-linked (GlcNAc...) asparagine glycosylation is present at N153. Residues 187 to 417 (IASGVIAPKA…YRNWIASKTG (231 aa)) enclose the Peptidase S1 domain. The cysteines at positions 212 and 228 are disulfide-linked. Catalysis depends on charge relay system residues H227 and D272. A glycan (N-linked (GlcNAc...) asparagine) is linked at N303. 2 cysteine pairs are disulfide-bonded: C337–C353 and C364–C393. The active-site Charge relay system is S368.

This sequence belongs to the peptidase S1 family. In terms of assembly, may interact with ZBTB17. Expressed in esophagus, liver, colon and lung. Down-regulated in esophagus cancers.

Its subcellular location is the membrane. Probable serine protease which may play a role in cellular senescence. Overexpression inhibits cell growth and induce G1 cell cycle arrest. The chain is Transmembrane protease serine 11A (TMPRSS11A) from Homo sapiens (Human).